A 379-amino-acid polypeptide reads, in one-letter code: Ribosomal RNA large subunit methyltransferase G (379 aa).

The protein belongs to the methyltransferase superfamily. RlmG family.

It is found in the cytoplasm. It carries out the reaction guanosine(1835) in 23S rRNA + S-adenosyl-L-methionine = N(2)-methylguanosine(1835) in 23S rRNA + S-adenosyl-L-homocysteine + H(+). Functionally, specifically methylates the guanine in position 1835 (m2G1835) of 23S rRNA. In Serratia proteamaculans (strain 568), this protein is Ribosomal RNA large subunit methyltransferase G.